A 310-amino-acid polypeptide reads, in one-letter code: Probable mitochondrial import receptor subunit TOM40-2 (310 aa).

Residue methionine 1 is modified to N-acetylmethionine.

It belongs to the Tom40 family. In terms of assembly, forms part of the preprotein translocase complex of the outer mitochondrial membrane (TOM complex) which consists of at least 6 different proteins (TOM5, TOM6, TOM7, TOM20, TOM22/TOM9 and TOM40). Present in a large lipid-enriched complex called mitochondrial transmembrane lipoprotein (MTL) complex made of proteins located in the two mitochondrial membranes, including the TOM complex and the core components of the MICOS complex and containing at least digalactosyldiacylglycerol (DGDG). Binds to MIC60. Component of a mitochondrial large protein complex that contains, at least, MIC60, DGS1, TOM40, TOM20 proteins, and petC/RISP. As to expression, expressed in roots, flowers, young cotyledons and leaves.

Its subcellular location is the mitochondrion outer membrane. Its function is as follows. Central component of the receptor complex responsible for the recognition and translocation of cytosolically synthesized mitochondrial preproteins. Together with TOM22 functions as the transit peptide receptor at the surface of the mitochondrion outer membrane and facilitates the movement of preproteins into the translocation pore. Directly involved in the pore formation. The polypeptide is Probable mitochondrial import receptor subunit TOM40-2 (Arabidopsis thaliana (Mouse-ear cress)).